The following is a 330-amino-acid chain: GMP reductase (330 aa).

Residue cysteine 180 is the Thioimidate intermediate of the active site. Residue 209–232 (LIADGGIRHNGDIAKSVRFGASMV) coordinates NADP(+).

The protein belongs to the IMPDH/GMPR family. GuaC type 2 subfamily.

The catalysed reaction is IMP + NH4(+) + NADP(+) = GMP + NADPH + 2 H(+). Its function is as follows. Catalyzes the irreversible NADPH-dependent deamination of GMP to IMP. It functions in the conversion of nucleobase, nucleoside and nucleotide derivatives of G to A nucleotides, and in maintaining the intracellular balance of A and G nucleotides. The protein is GMP reductase of Lactobacillus delbrueckii subsp. bulgaricus (strain ATCC BAA-365 / Lb-18).